Here is a 350-residue protein sequence, read N- to C-terminus: Twinfilin-1 (350 aa).

2 ADF-H domains span residues 4-139 (QTGI…KYLA) and 177-313 (GIAF…EEVH). The segment at 316-350 (QHAHKQNFAKPKGPAGKRGIRRLIRGPAEAETAND) is disordered.

This sequence belongs to the actin-binding proteins ADF family. Twinfilin subfamily. As to quaternary structure, interacts with G-actin; ADP-actin form.

It is found in the cytoplasm. It localises to the cytoskeleton. Its function is as follows. Actin-binding protein involved in motile and morphological processes. Inhibits actin polymerization, likely by sequestering G-actin. In Xenopus tropicalis (Western clawed frog), this protein is Twinfilin-1 (twf1).